A 302-amino-acid chain; its full sequence is MSSAAESSPTPFGRLLTAMVTPFDADGCVDLALAGRLARYLVDEGSDGLVVCGTTGESPTLSWQEQHQLLGVVRQAVGPGVKVLAGTGSNSTAEAIEATTQAAAVGADGALVVVPYYNKPPQEGLEAHFRAIAQAAPELPLMLYNIPGRTGCSLAPATVARLMECPNVVSFKAASGTTDEVTQLRLQCGSKLAVYSGDDGLLLPMMSVGAVGVVSVASHLVGRRLKAMIEAYLNGQGALALSYHEQLQPLFKALFVTTNPIPVKAALELSGWPVGSPRLPLLPLDPVMRDALSNTLTALCQT.

T55 provides a ligand contact to pyruvate. Y144 serves as the catalytic Proton donor/acceptor. K172 (schiff-base intermediate with substrate) is an active-site residue. Residue V214 coordinates pyruvate.

The protein belongs to the DapA family. Homotetramer; dimer of dimers.

It is found in the cytoplasm. It carries out the reaction L-aspartate 4-semialdehyde + pyruvate = (2S,4S)-4-hydroxy-2,3,4,5-tetrahydrodipicolinate + H2O + H(+). Its pathway is amino-acid biosynthesis; L-lysine biosynthesis via DAP pathway; (S)-tetrahydrodipicolinate from L-aspartate: step 3/4. Its function is as follows. Catalyzes the condensation of (S)-aspartate-beta-semialdehyde [(S)-ASA] and pyruvate to 4-hydroxy-tetrahydrodipicolinate (HTPA). The sequence is that of 4-hydroxy-tetrahydrodipicolinate synthase from Prochlorococcus marinus (strain MIT 9303).